We begin with the raw amino-acid sequence, 248 residues long: 4-hydroxy-tetrahydrodipicolinate reductase (248 aa).

Position 13 to 18 (13 to 18 (GITGRL)) interacts with NAD(+). Arginine 36 is an NADP(+) binding site. Residues 84-86 (GTT) and 108-111 (AANF) each bind NAD(+). The active-site Proton donor/acceptor is histidine 140. Residue histidine 141 participates in (S)-2,3,4,5-tetrahydrodipicolinate binding. Residue lysine 144 is the Proton donor of the active site. 150-151 (GT) contributes to the (S)-2,3,4,5-tetrahydrodipicolinate binding site.

Belongs to the DapB family.

It is found in the cytoplasm. It catalyses the reaction (S)-2,3,4,5-tetrahydrodipicolinate + NAD(+) + H2O = (2S,4S)-4-hydroxy-2,3,4,5-tetrahydrodipicolinate + NADH + H(+). The enzyme catalyses (S)-2,3,4,5-tetrahydrodipicolinate + NADP(+) + H2O = (2S,4S)-4-hydroxy-2,3,4,5-tetrahydrodipicolinate + NADPH + H(+). It participates in amino-acid biosynthesis; L-lysine biosynthesis via DAP pathway; (S)-tetrahydrodipicolinate from L-aspartate: step 4/4. Functionally, catalyzes the conversion of 4-hydroxy-tetrahydrodipicolinate (HTPA) to tetrahydrodipicolinate. This is 4-hydroxy-tetrahydrodipicolinate reductase from Gluconobacter oxydans (strain 621H) (Gluconobacter suboxydans).